The primary structure comprises 342 residues: Inositol-tetrakisphosphate 1-kinase 1 (342 aa).

1D-myo-inositol 6-phosphate is bound by residues Lys-28 and Lys-70. Residues Arg-105 and Lys-155 each coordinate ATP. The ATP-grasp domain maps to 116–332 (DHAADQDSTF…HKDGVGNQQE (217 aa)). 2 residues coordinate 1D-myo-inositol 6-phosphate: Gly-161 and His-166. Residues His-166, Gln-187, and Val-190 each coordinate ATP. 1D-myo-inositol 6-phosphate is bound by residues Lys-198 and Tyr-200. Residue Ser-213 participates in ATP binding. Residues 219-247 (PEDDASAQGSVSFSQVSNLPTERTAEEYY) are catalytic specificity elements (CSE). Asn-280 serves as a coordination point for 1D-myo-inositol 6-phosphate. Asp-282 is a Mg(2+) binding site. Residues Ile-296, Asp-297, and Asn-299 each contribute to the ATP site. Residues Asp-297 and Asn-299 each contribute to the Mg(2+) site. Residues Asn-299, Gly-303, and Lys-306 each coordinate 1D-myo-inositol 6-phosphate.

This sequence belongs to the ITPK1 family. Monomer. It depends on Mg(2+) as a cofactor. As to expression, expressed in the embryo of 15 day after pollination. Expressed in kernels at earlier stages but at very low levels. Expression in the embryo peaks at 15 days after pollination and then declines. No expression is detected from endosperm and vegetative tissues.

The enzyme catalyses 1D-myo-inositol 3,4,5,6-tetrakisphosphate + ATP = 1D-myo-inositol 1,3,4,5,6-pentakisphosphate + ADP + H(+). The catalysed reaction is 1D-myo-inositol 1,3,4-trisphosphate + ATP = 1D-myo-inositol 1,3,4,5-tetrakisphosphate + ADP + H(+). It catalyses the reaction 1D-myo-inositol 1,3,4-trisphosphate + ATP = 1D-myo-inositol 1,3,4,6-tetrakisphosphate + ADP + H(+). It carries out the reaction 1D-myo-inositol 1,2,3,4,5-pentakisphosphate + ATP = 3-diphospho-1D-myo-inositol 1,2,4,5-tetrakisphosphate + ADP. The enzyme catalyses 1D-myo-inositol hexakisphosphate + ATP = 5-diphospho-1D-myo-inositol 1,2,3,4,6-pentakisphosphate + ADP. Its function is as follows. Kinase that can phosphorylate various inositol polyphosphate such as Ins(3,4,5,6)P4 or Ins(1,3,4)P3 and participates in phytic acid biosynthesis in developing seeds. Phosphorylates Ins(3,4,5,6)P4 at position 1 to form Ins(1,3,4,5,6)P5. This reaction is thought to have regulatory importance, since Ins(3,4,5,6)P4 is an inhibitor of plasma membrane Ca(2+)-activated Cl(-) channels, while Ins(1,3,4,5,6)P5 is not. Also phosphorylates Ins(1,3,4)P3 on O-5 and O-6 to form Ins(1,3,4,6)P4, an essential molecule in the hexakisphosphate (InsP6) pathway. Also able to phosphorylate Ins(3,5,6)P3 but not Ins(1,4,5)P3, Ins(2,4,5)P3, Ins(1,3,4,6)P4 nor Ins(1,3,5,6)P4. Has higher specific activity on Ins(3,4,5,6)P4 than Ins(1,3,4)P3 and Ins(3,5,6)P3. Can also could use Ins(1,2,5,6)P4 as a substrate. Able to add a beta-phosphate to the 3 positions of Ins(1,2,3,4,5)P5 and to add beta-phosphate to InsP6 to yield 5-InsP7, thus exhibiting InsP6 kinase activity. Also has Ins(1,3,4,5,6)P5 phosphatase activity. In Zea mays (Maize), this protein is Inositol-tetrakisphosphate 1-kinase 1.